A 152-amino-acid chain; its full sequence is Leptin (152 aa).

The signal sequence occupies residues 1 to 26; it reads MDHILALVLALLPLSLCVALPGALDA. A disulfide bridge connects residues C109 and C152.

It belongs to the leptin family. Expressed mostly in the liver.

The protein localises to the secreted. May function as part of a signaling pathway that acts to regulate the size of the body fat depot. This is Leptin (lep) from Takifugu rubripes (Japanese pufferfish).